We begin with the raw amino-acid sequence, 301 residues long: Glycine--tRNA ligase alpha subunit (301 aa).

It belongs to the class-II aminoacyl-tRNA synthetase family. Tetramer of two alpha and two beta subunits.

The protein resides in the cytoplasm. It catalyses the reaction tRNA(Gly) + glycine + ATP = glycyl-tRNA(Gly) + AMP + diphosphate. The polypeptide is Glycine--tRNA ligase alpha subunit (Neisseria meningitidis serogroup C (strain 053442)).